The chain runs to 547 residues: MSLVESPPWQALKSKYQELSSLHMRDFFAQDKKRGTRLSLEAAGLYFDYSKNRVDEKTIDLLCESANACNLPLRIEQLFSGKLTNESGEMVGFHTALRQVNNFSFKTNNNAIQEIHASWEKIKKLSIRIREGDYKGFTNKSITDIVNIGIGGSSLGPQMAYNALKPYVKAPLRCHFISNLDDTDFYETVRTLNPETTLFIITSKTFTTKETLENARRATEWLMQAAKKENLIQTHFMAVTAAPEKAHEFGIQKDNIFMLWPWVGGRFSVWSAAGLSLAIAIGWEEFFEFLRGAHAMDTHFRQAEFNKNMPILLALLSIWYINFFHAKTQAIIPYSQRLVYLPDYLTQLHMESLGKSVQLDGSAVHWQTGAVVWGDLGTNSQHSFHQLFLQGTMVIPVDFIAVLKNSRESHWQLPLIANCLGQSQTLMEGYDKEGVMRDLINQGIEHEKAEKLATYRLIRGNNPSNTIILEELNPYSLGSLLALYEHKVYVQSVIWNINPFNQWGVERGKHLAKDILQALQAETDQSSFDSSTERLINYVLKIKGNRP.

The active-site Proton donor is E351. Residues H382 and K509 contribute to the active site.

The protein belongs to the GPI family.

Its subcellular location is the cytoplasm. The enzyme catalyses alpha-D-glucose 6-phosphate = beta-D-fructose 6-phosphate. The protein operates within carbohydrate biosynthesis; gluconeogenesis. It functions in the pathway carbohydrate degradation; glycolysis; D-glyceraldehyde 3-phosphate and glycerone phosphate from D-glucose: step 2/4. Its function is as follows. Catalyzes the reversible isomerization of glucose-6-phosphate to fructose-6-phosphate. The protein is Glucose-6-phosphate isomerase of Coxiella burnetii (strain Dugway 5J108-111).